Consider the following 183-residue polypeptide: Ribulose bisphosphate carboxylase small subunit, chloroplastic 3 (183 aa).

Residues 1–43 (MATTMLNRSVIVNKEVAKTPNFPRATKNNKGFASNAAVQKCRD) constitute a chloroplast transit peptide.

This sequence belongs to the RuBisCO small chain family. As to quaternary structure, heterohexadecamer of 8 large and 8 small subunits.

The protein resides in the plastid. Its subcellular location is the chloroplast. RuBisCO catalyzes two reactions: the carboxylation of D-ribulose 1,5-bisphosphate, the primary event in carbon dioxide fixation, as well as the oxidative fragmentation of the pentose substrate. Both reactions occur simultaneously and in competition at the same active site. Although the small subunit is not catalytic it is essential for maximal activity. This chain is Ribulose bisphosphate carboxylase small subunit, chloroplastic 3, found in Acetabularia peniculus (Green alga).